A 378-amino-acid polypeptide reads, in one-letter code: UPF0754 membrane protein BCA_0919 (378 aa).

Helical transmembrane passes span 1–21 (MNIW…GGFT) and 357–377 (YLGA…LLFL).

Belongs to the UPF0754 family.

It is found in the cell membrane. The protein is UPF0754 membrane protein BCA_0919 of Bacillus cereus (strain 03BB102).